A 153-amino-acid polypeptide reads, in one-letter code: MSLLFQQTVPLSHLHRSLDPPLCFRTHILLILLLLSRHLPGFTGSDCESADPSIVSAIAPGTATTSERDCPVRTAGSDPVPIGDSGTFFDVGTAAPELLSPNRHHMITRAKDGIRKPNPRYNLFTQKYTPSEPKTITSASQDGDKLCKKRCRH.

Its subcellular location is the mitochondrion. This is an uncharacterized protein from Arabidopsis thaliana (Mouse-ear cress).